We begin with the raw amino-acid sequence, 524 residues long: Solute carrier family 40 member 1 (524 aa).

Residues 1–18 show a composition bias toward basic and acidic residues; that stretch reads MENETELRVVHQEEQQRE. The interval 1-30 is disordered; the sequence is MENETELRVVHQEEQQREEGEDESQPQNPP. The next 11 helical transmembrane spans lie at 70–92, 109–129, 137–157, 191–211, 218–238, 314–334, 347–367, 380–400, 409–429, 446–466, and 472–492; these read SLLL…GPIV, LLFQ…LLLV, LPVF…GVLS, GIDL…ISFV, ITFA…FISV, VVLP…FGTL, YIIG…TLVY, GLWS…SIWV, MLMA…LAVI, GVQN…GIIV, and FWIL…LYTI.

The protein belongs to the ferroportin (FP) (TC 2.A.100) family. SLC40A subfamily.

It is found in the membrane. Functionally, may be involved in iron transport and iron homeostasis. The protein is Solute carrier family 40 member 1 (IREG1) of Arabidopsis thaliana (Mouse-ear cress).